A 187-amino-acid polypeptide reads, in one-letter code: Proline-rich protein 29 (187 aa).

The disordered stretch occupies residues His133–Pro187.

This Mus musculus (Mouse) protein is Proline-rich protein 29 (Prr29).